We begin with the raw amino-acid sequence, 90 residues long: Translation initiation factor IF-1 2 (90 aa).

The S1-like domain occupies M1–K72.

The protein belongs to the IF-1 family. As to quaternary structure, component of the 30S ribosomal translation pre-initiation complex which assembles on the 30S ribosome in the order IF-2 and IF-3, IF-1 and N-formylmethionyl-tRNA(fMet); mRNA recruitment can occur at any time during PIC assembly.

The protein resides in the cytoplasm. Its function is as follows. One of the essential components for the initiation of protein synthesis. Stabilizes the binding of IF-2 and IF-3 on the 30S subunit to which N-formylmethionyl-tRNA(fMet) subsequently binds. Helps modulate mRNA selection, yielding the 30S pre-initiation complex (PIC). Upon addition of the 50S ribosomal subunit IF-1, IF-2 and IF-3 are released leaving the mature 70S translation initiation complex. The sequence is that of Translation initiation factor IF-1 2 from Paraburkholderia xenovorans (strain LB400).